Consider the following 260-residue polypeptide: Proteasome subunit alpha 1 (260 aa).

Positions 237–260 are disordered; that stretch reads AEADLLDTGEDADDEAEDEDATEE. Over residues 240-260 the composition is skewed to acidic residues; that stretch reads DLLDTGEDADDEAEDEDATEE.

It belongs to the peptidase T1A family. In terms of assembly, the 20S proteasome core is composed of 14 alpha and 14 beta subunits that assemble into four stacked heptameric rings, resulting in a barrel-shaped structure. The two inner rings, each composed of seven catalytic beta subunits, are sandwiched by two outer rings, each composed of seven alpha subunits. The catalytic chamber with the active sites is on the inside of the barrel. Has a gated structure, the ends of the cylinder being occluded by the N-termini of the alpha-subunits. Is capped at one or both ends by the proteasome regulatory ATPase, PAN.

The protein resides in the cytoplasm. With respect to regulation, the formation of the proteasomal ATPase PAN-20S proteasome complex, via the docking of the C-termini of PAN into the intersubunit pockets in the alpha-rings, triggers opening of the gate for substrate entry. Interconversion between the open-gate and close-gate conformations leads to a dynamic regulation of the 20S proteasome proteolysis activity. Its function is as follows. Component of the proteasome core, a large protease complex with broad specificity involved in protein degradation. The chain is Proteasome subunit alpha 1 from Haloarcula marismortui (strain ATCC 43049 / DSM 3752 / JCM 8966 / VKM B-1809) (Halobacterium marismortui).